Reading from the N-terminus, the 155-residue chain is Large ribosomal subunit protein uL13 (155 aa).

It belongs to the universal ribosomal protein uL13 family. Part of the 50S ribosomal subunit.

Functionally, this protein is one of the early assembly proteins of the 50S ribosomal subunit, although it is not seen to bind rRNA by itself. It is important during the early stages of 50S assembly. In Aeropyrum pernix (strain ATCC 700893 / DSM 11879 / JCM 9820 / NBRC 100138 / K1), this protein is Large ribosomal subunit protein uL13.